A 927-amino-acid chain; its full sequence is Sodium/calcium exchanger 3 (927 aa).

The N-terminal stretch at 1 to 30 (MAWLRLQPLTSAFLHFGLVTFVLFLNGLRA) is a signal peptide. Over 31-73 (EAGDLRDVPSAGQNNESCSGSSDCKEGVILPIWYPENPSLGDK) the chain is Extracellular. N-linked (GlcNAc...) asparagine glycosylation occurs at asparagine 45. A helical transmembrane segment spans residues 74–94 (IARVIVYFVALIYMFLGVSII). Topologically, residues 95–147 (ADRFMASIEVITSQEREVTIKKPNGETSTTTIRVWNETVSNLTLMALGSSAPE) are cytoplasmic. The Alpha-1 repeat unit spans residues 140-180 (ALGSSAPEILLSLIEVCGHGFIAGDLGPSTIVGSAAFNMFI). A helical membrane pass occupies residues 148–168 (ILLSLIEVCGHGFIAGDLGPS). Residue threonine 169 is a topological domain, extracellular. Residues 170–190 (IVGSAAFNMFIIIGICVYVIP) traverse the membrane as a helical segment. Topologically, residues 191 to 202 (DGETRKIKHLRV) are cytoplasmic. The helical transmembrane segment at 203–223 (FFVTAAWSVFAYIWLYMILAV) threads the bilayer. At 224–230 (FSPGVVQ) the chain is on the extracellular side. A helical transmembrane segment spans residues 231–251 (VWEGLLTLFFFPVCVLLAWVA). At 252–726 (DKRLLFYKYM…DESGEERLPS (475 aa)) the chain is on the cytoplasmic side. Positions 253–272 (KRLLFYKYMHKRYRTDKHRG) are putative calmodulin-binding region. 2 consecutive Calx-beta domains span residues 386–485 (VHTD…VRLS) and 519–619 (ATVT…IALG). Residues glutamate 409, aspartate 445, aspartate 470, aspartate 471, isoleucine 473, glutamate 475, glutamate 478, aspartate 525, aspartate 526, aspartate 527, glutamate 543, aspartate 579, glutamate 606, glutamate 607, and glutamate 672 each contribute to the Ca(2+) site. The helical transmembrane segment at 727 to 747 (CFDYVMHFLTVFWKVLFACVP) threads the bilayer. Over 748–754 (PTEYCHG) the chain is Extracellular. Residues 755 to 775 (WACFVVSILIIGMLTAIIGDL) form a helical membrane-spanning segment. The Cytoplasmic segment spans residues 776–778 (ASH). Residues 779–799 (FGCTIGLKDSVTAVVFVAFGT) traverse the membrane as a helical segment. The Alpha-2 repeat unit spans residues 796–832 (AFGTSVPDTFASKAAALQDVYADASIGNVTGSNAVNV). Over 800-828 (SVPDTFASKAAALQDVYADASIGNVTGSN) the chain is Extracellular. An N-linked (GlcNAc...) asparagine glycan is attached at asparagine 823. Residues 829-849 (AVNVFLGIGLAWSVAAIYWAM) form a helical membrane-spanning segment. At 850-860 (QGQEFHVSAGT) the chain is on the cytoplasmic side. The helical transmembrane segment at 861–881 (LAFSVTLFTIFAFVCLSVLLY) threads the bilayer. The Extracellular portion of the chain corresponds to 882 to 903 (RRRPHLGGELGGPRGCKLATTW). A helical transmembrane segment spans residues 904 to 924 (LFVSLWLLYVLFATLEAYCYI). Over 925–927 (KGF) the chain is Cytoplasmic.

It belongs to the Ca(2+):cation antiporter (CaCA) (TC 2.A.19) family. SLC8 subfamily. Interacts with AKAP1. As to expression, detected in neurons in brain cortex and hippocampus. Detected in pyramidal cell bodies and processes, in granule cells and interneurons in the CA1 and CA3 region of the hippocampus. Detected on astrocyte processes in brain cortex. Detected on endothelial cells in hippocampus capillaries (at protein level). Restricted to brain and skeletal muscle.

Its subcellular location is the cell membrane. The protein resides in the perikaryon. It localises to the cell projection. It is found in the dendrite. The protein localises to the dendritic spine. Its subcellular location is the sarcolemma. The protein resides in the cytoplasm. It localises to the sarcoplasm. It is found in the cell junction. The protein localises to the mitochondrion outer membrane. Its subcellular location is the endoplasmic reticulum membrane. The protein resides in the perinuclear region. It carries out the reaction Ca(2+)(in) + 3 Na(+)(out) = Ca(2+)(out) + 3 Na(+)(in). Its activity is regulated as follows. Calcium transport is down-regulated by Na(+) and stimulated by Ca(2+). Mediates the electrogenic exchange of Ca(2+) against Na(+) ions across the cell membrane, and thereby contributes to the regulation of cytoplasmic Ca(2+) levels and Ca(2+)-dependent cellular processes. Contributes to cellular Ca(2+) homeostasis in excitable cells, both in muscle and in brain. In a first phase, voltage-gated channels mediate the rapid increase of cytoplasmic Ca(2+) levels due to release of Ca(2+) stores from the endoplasmic reticulum. SLC8A3 mediates the export of Ca(2+) from the cell during the next phase, so that cytoplasmic Ca(2+) levels rapidly return to baseline. Contributes to Ca(2+) transport during excitation-contraction coupling in muscle. In neurons, contributes to the rapid decrease of cytoplasmic Ca(2+) levels back to baseline after neuronal activation, and thereby contributes to modulate synaptic plasticity, learning and memory. Required for normal oligodendrocyte differentiation and for normal myelination. Mediates Ca(2+) efflux from mitochondria and contributes to mitochondrial Ca(2+) ion homeostasis. This is Sodium/calcium exchanger 3 (Slc8a3) from Rattus norvegicus (Rat).